We begin with the raw amino-acid sequence, 612 residues long: Elongation factor 4 (612 aa).

The tr-type G domain occupies 11 to 193 (KHIRNFSIVA…EIVKKVPAPD (183 aa)). GTP contacts are provided by residues 23-28 (DHGKST) and 140-143 (NKID).

This sequence belongs to the TRAFAC class translation factor GTPase superfamily. Classic translation factor GTPase family. LepA subfamily.

It localises to the cell membrane. The catalysed reaction is GTP + H2O = GDP + phosphate + H(+). Required for accurate and efficient protein synthesis under certain stress conditions. May act as a fidelity factor of the translation reaction, by catalyzing a one-codon backward translocation of tRNAs on improperly translocated ribosomes. Back-translocation proceeds from a post-translocation (POST) complex to a pre-translocation (PRE) complex, thus giving elongation factor G a second chance to translocate the tRNAs correctly. Binds to ribosomes in a GTP-dependent manner. This chain is Elongation factor 4, found in Lactobacillus johnsonii (strain CNCM I-12250 / La1 / NCC 533).